Reading from the N-terminus, the 220-residue chain is Flagellin A2 (220 aa).

Residues Met-1 to Gly-11 constitute a propeptide that is removed on maturation. N-linked (GlcNAc...) asparagine glycans are attached at residues Asn-78, Asn-95, Asn-112, and Asn-124.

This sequence belongs to the archaeal flagellin family. Glycosylated by a pentasaccharide similar to the S-layer glycoprotein, probably comprising a hexose, 2 hexuronic acids, a methyl ester of a hexuronic acid and mannose.

Its subcellular location is the archaeal flagellum. Functionally, flagellin that plays both structural and regulatory roles in flagella biosynthesis. Does not constitute a major flagellin in terms of abundance contrary to FlgA1: may regulate the flagella-dependent swimming motility depending on the relative abundance of FlgA1. Not involved in PibD-dependent surface adhesion. The sequence is that of Flagellin A2 (flgA2) from Haloferax volcanii (strain ATCC 29605 / DSM 3757 / JCM 8879 / NBRC 14742 / NCIMB 2012 / VKM B-1768 / DS2) (Halobacterium volcanii).